Here is a 161-residue protein sequence, read N- to C-terminus: Protein shisa-like-2B (161 aa).

The chain crosses the membrane as a helical span at residues 65 to 85; that stretch reads IGALIGLGIAALVLLAFVISV. Residues 115–134 form a disordered region; sequence QEGNSNRKSKAPRSNAASNS.

Belongs to the shisa family.

Its subcellular location is the membrane. In Bos taurus (Bovine), this protein is Protein shisa-like-2B (SHISAL2B).